Reading from the N-terminus, the 528-residue chain is Linear primary-alkylsulfatase (528 aa).

H42, H44, D46, H47, E151, and E170 together coordinate Zn(2+). Sulfate-binding positions include 179-184 and R189; that span reads NVHTLR. H213 serves as a coordination point for Zn(2+). Residue Y275 coordinates sulfate.

This sequence belongs to the metallo-beta-lactamase superfamily. Type III sulfatase family. Zn(2+) serves as cofactor.

The enzyme catalyses a primary linear alkyl sulfate ester + H2O = a primary alcohol + sulfate + H(+). In terms of biological role, alkylsulfatase that cleaves the widely used detergent sodium dodecyl sulfate (SDS), which allows the bacterium to use SDS as a sole carbon or sulfur source. This chain is Linear primary-alkylsulfatase, found in Pseudomonas sp. (strain ATCC 19151).